Consider the following 347-residue polypeptide: Protein FAM50 homolog (347 aa).

The span at 77–113 shows a compositional bias: basic and acidic residues; the sequence is EDIVREREKKLAQKKEEKDREKLKALEAKQAEKDRQR. Positions 77-142 are disordered; the sequence is EDIVREREKK…EDEEEPLEIK (66 aa). Positions 123-138 are enriched in acidic residues; that stretch reads PEEDEESFDDEDEEEP.

This sequence belongs to the FAM50 family.

The chain is Protein FAM50 homolog from Aedes aegypti (Yellowfever mosquito).